Consider the following 396-residue polypeptide: Decapping and exoribonuclease protein (396 aa).

Basic and acidic residues predominate over residues 1 to 20 (MDPRGTKRGAEKTEVAEPRN). Positions 1 to 37 (MDPRGTKRGAEKTEVAEPRNKLPRPAPSLPTDPALYS) are disordered. Residues arginine 58, glutamate 101, and 131 to 133 (WRG) contribute to the substrate site. A Mg(2+)-binding site is contributed by glutamate 192. 2 residues coordinate substrate: cysteine 217 and glutamate 234. Mg(2+)-binding residues include glutamate 234, aspartate 236, glutamate 253, and leucine 254. Substrate contacts are provided by lysine 255 and glutamine 280. Position 392 is a phosphothreonine (threonine 392). Serine 394 carries the phosphoserine modification.

Belongs to the DXO/Dom3Z family. The cofactor is Mg(2+). As to expression, ubiquitously expressed.

The protein localises to the nucleus. It carries out the reaction a 5'-end triphospho-ribonucleoside in mRNA + H2O = a 5'-end phospho-ribonucleoside in mRNA + diphosphate + H(+). The catalysed reaction is a 5'-end NAD(+)-phospho-ribonucleoside in mRNA + H2O = a 5'-end phospho-ribonucleoside in mRNA + NAD(+) + H(+). The enzyme catalyses a 5'-end NAD(+)-phospho-ribonucleoside in snoRNA + H2O = a 5'-end phospho-ribonucleoside in snoRNA + NAD(+) + H(+). It catalyses the reaction a 5'-end (N(7)-methyl 5'-triphosphoguanosine)-ribonucleoside-ribonucleotide in mRNA + H2O = a (N(7)-methyl 5'-triphosphoguanosine)-nucleoside + a 5'-end phospho-ribonucleoside in mRNA + H(+). It carries out the reaction a 5'-end FAD-phospho-ribonucleoside in mRNA + H2O = a 5'-end phospho-ribonucleoside in mRNA + FAD + H(+). The catalysed reaction is a 5'-end CoA-ribonucleoside in mRNA + H2O = 3'-dephospho-CoA + a 5'-end phospho-ribonucleoside in mRNA + H(+). Decapping enzyme for NAD-capped RNAs: specifically hydrolyzes the nicotinamide adenine dinucleotide (NAD) cap from a subset of RNAs by removing the entire NAD moiety from the 5'-end of an NAD-capped RNA. The NAD-cap is present at the 5'-end of some RNAs and snoRNAs. In contrast to the canonical 5'-end N7 methylguanosine (m7G) cap, the NAD cap promotes mRNA decay. Preferentially acts on NAD-capped transcripts in response to environmental stress. Also acts as a non-canonical decapping enzyme that removes the entire cap structure of m7G capped or incompletely capped RNAs and mediates their subsequent degradation. Specifically degrades pre-mRNAs with a defective 5'-end m7G cap and is part of a pre-mRNA capping quality control. Has decapping activity toward incomplete 5'-end m7G cap mRNAs such as unmethylated 5'-end-capped RNA (cap0), while it has no activity toward 2'-O-ribose methylated m7G cap (cap1). In contrast to canonical decapping enzymes DCP2 and NUDT16, which cleave the cap within the triphosphate linkage, the decapping activity releases the entire cap structure GpppN and a 5'-end monophosphate RNA. Also has 5'-3' exoribonuclease activities: The 5'-end monophosphate RNA is then degraded by the 5'-3' exoribonuclease activity, enabling this enzyme to decap and degrade incompletely capped mRNAs. Also possesses RNA 5'-pyrophosphohydrolase activity by hydrolyzing the 5'-end triphosphate to release pyrophosphates. Exhibits decapping activity towards FAD-capped RNAs. Exhibits decapping activity towards dpCoA-capped RNAs in vitro. In Homo sapiens (Human), this protein is Decapping and exoribonuclease protein.